A 288-amino-acid polypeptide reads, in one-letter code: Protease HtpX (288 aa).

2 consecutive transmembrane segments (helical) span residues 4–24 and 36–56; these read VMLF…VLNI and LSGL…ISLM. His-143 lines the Zn(2+) pocket. Glu-144 is a catalytic residue. His-147 contributes to the Zn(2+) binding site. 2 consecutive transmembrane segments (helical) span residues 151–171 and 193–213; these read GDMV…IFLS and MVYF…ASFI. Glu-222 is a binding site for Zn(2+).

It belongs to the peptidase M48B family. Zn(2+) is required as a cofactor.

It is found in the cell inner membrane. The protein is Protease HtpX of Vibrio vulnificus (strain YJ016).